Here is a 223-residue protein sequence, read N- to C-terminus: Twisted gastrulation protein homolog 1 (223 aa).

Positions 1–25 are cleaved as a signal peptide; the sequence is MKLHYVAVLTLAILMFLTWLPESLS. N-linked (GlcNAc...) asparagine glycosylation is found at Asn-52 and Asn-81.

This sequence belongs to the twisted gastrulation protein family. Interacts with CHRD and BMP4. This interaction enhances CHRD/BMP4 complex formation. Interacts with BMP7.

The protein resides in the secreted. Functionally, may be involved in dorsoventral axis formation. Seems to antagonize BMP signaling by forming ternary complexes with CHRD and BMPs, thereby preventing BMPs from binding to their receptors. In addition to the anti-BMP function, also has pro-BMP activity, partly mediated by cleavage and degradation of CHRD, which releases BMPs from ternary complexes. May be an important modulator of BMP-regulated cartilage development and chondrocyte differentiation. May play a role in thymocyte development. This is Twisted gastrulation protein homolog 1 (TWSG1) from Homo sapiens (Human).